The chain runs to 466 residues: Amino acid permease 4 (466 aa).

Topologically, residues 1–22 (MDVPRPAFKCFDDDGRLKRSGT) are cytoplasmic. The next 2 membrane-spanning stretches (helical) occupy residues 23 to 43 (VWTA…LSLA) and 44 to 64 (WAIG…FSFV). The Cytoplasmic segment spans residues 65 to 111 (TYYSSTLLSDCYRTGDPVSGKRNYTYMDAVRSILGGFRFKICGLIQY). Residues 112–132 (LNLFGITVGYTIAASISMMAI) form a helical membrane-spanning segment. At 133-177 (KRSNCFHESGGKNPCHMSSNPYMIMFGVTEILLSQIKDFDQIWWL) the chain is on the extracellular side. A helical transmembrane segment spans residues 178–198 (SIVAAIMSFTYSAIGLALGII). The Cytoplasmic portion of the chain corresponds to 199 to 226 (QVAANGVVKGSLTGISIGAVTQTQKIWR). A helical membrane pass occupies residues 227–247 (TFQALGDIAFAYSYSVVLIEI). The Extracellular segment spans residues 248-266 (QDTVRSPPAESKTMKIATR). A helical membrane pass occupies residues 267–287 (ISIAVTTTFYMLCGCMGYAAF). The Cytoplasmic segment spans residues 288–290 (GDK). Residues 291–311 (APGNLLTGFGFYNPFWLLDVA) form a helical membrane-spanning segment. Residues 312-313 (NA) are Extracellular-facing. A helical transmembrane segment spans residues 314 to 334 (AIVIHLVGAYQVFAQPIFAFI). Residues 335 to 369 (EKQAAARFPDSDLVTKEYEIRIPGFRSPYKVNVFR) are Cytoplasmic-facing. Residues 370–390 (AVYRSGFVVLTTVISMLMPFF) form a helical membrane-spanning segment. At 391-392 (ND) the chain is on the extracellular side. Residues 393-413 (VVGILGALGFWPLTVYFPVEM) traverse the membrane as a helical segment. Residues 414–435 (YIRQRKVERWSMKWVCLQMLSC) are Cytoplasmic-facing. A helical membrane pass occupies residues 436–456 (GCLMITLVAGVGSIAGVMLDL). Topologically, residues 457-466 (KVYKPFKTTY) are extracellular.

Belongs to the amino acid/polyamine transporter 2 family. Amino acid/auxin permease (AAAP) (TC 2.A.18.2) subfamily. In terms of tissue distribution, expressed in leaves, stems and flowers.

It localises to the cell membrane. Its activity is regulated as follows. Inhibited by 2,4-dinitrophenol. Functionally, amino acid-proton symporter. Stereospecific transporter with a broad specificity for neutral amino acids, favoring small amino acids such as alanine, asparagine and glutamine. Also accepts large aromatic residues such as in phenlalanine or tyrosine. This is Amino acid permease 4 (AAP4) from Arabidopsis thaliana (Mouse-ear cress).